The chain runs to 313 residues: Malate dehydrogenase (313 aa).

NAD(+) contacts are provided by residues Gly8 to Gly13 and Asp33. Positions 83 and 89 each coordinate substrate. Residues Asn96 and Ile119–Asn121 each bind NAD(+). 2 residues coordinate substrate: Asn121 and Arg152. Residue His176 is the Proton acceptor of the active site.

Belongs to the LDH/MDH superfamily. MDH type 3 family.

It catalyses the reaction (S)-malate + NAD(+) = oxaloacetate + NADH + H(+). Functionally, catalyzes the reversible oxidation of malate to oxaloacetate. This is Malate dehydrogenase from Bacteroides fragilis (strain ATCC 25285 / DSM 2151 / CCUG 4856 / JCM 11019 / LMG 10263 / NCTC 9343 / Onslow / VPI 2553 / EN-2).